A 694-amino-acid chain; its full sequence is Lamina-associated polypeptide 2, isoform alpha (694 aa).

In terms of domain architecture, LEM-like spans 5–48 (LEDPSVLTKDKLKSELVANNVTLPAGEQRKDVYVQLYLQHLTAR). Disordered stretches follow at residues 47 to 117 (ARNR…ELTN) and 150 to 209 (REQG…FSEL). The segment at 49–108 (NRPPLPAGTNSKGPPDFSSDEEREPTPVLGSGAAAAGRSRAAVGRKATKKTDKPRQEDKD) is linker. The residue at position 57 (threonine 57) is a Phosphothreonine. Residues serine 59, serine 66, and serine 67 each carry the phosphoserine modification. Residue threonine 74 is modified to Phosphothreonine. A compositionally biased stretch (low complexity) spans 78-93 (GSGAAAAGRSRAAVGR). Serine 79 is modified (phosphoserine). Arginine 86 and arginine 88 each carry omega-N-methylarginine. The segment covering 97-106 (KKTDKPRQED) has biased composition (basic and acidic residues). A compositionally biased stretch (acidic residues) spans 107–117 (KDDLDVTELTN). An LEM domain is found at 109–153 (DLDVTELTNEDLLDQLVKYGVNPGPIVGTTRKLYEKKLLKLREQG). At threonine 154 the chain carries Phosphothreonine. A compositionally biased stretch (polar residues) spans 155 to 178 (ESRSSTPLPTISSSAENTRQNGSN). Residues serine 156 and serine 159 each carry the phosphoserine modification. Phosphothreonine occurs at positions 160 and 164. 2 positions are modified to phosphoserine: serine 166 and serine 168. Over residues 179-191 (DSDRYSDNEEGKK) the composition is skewed to basic and acidic residues. A Nuclear localization signal motif is present at residues 190–196 (KKKEHKK). Serine 272, serine 312, serine 351, serine 354, serine 370, and serine 424 each carry phosphoserine. Positions 338–368 (QPLCPERSHISDQSPLSSKRKALEESESSQL) are disordered. Residues 558-657 (TESCNQQLDL…VGRRYLWLKD (100 aa)) adopt a coiled-coil conformation. Lysine 656 carries the N6-acetyllysine modification.

Belongs to the LEM family. As to quaternary structure, interacts with LMNA, BANF1 and RB1 and with chromosomes. Associates directly or indirectly with lamins at specific cell-cycle stages. Interacts with CMTM6. Phosphorylated in a mitose-specific manner. As to expression, expressed in many tissues. Most abundant in adult thymus and fetal liver.

It is found in the nucleus. It localises to the chromosome. Its function is as follows. May be involved in the structural organization of the nucleus and in the post-mitotic nuclear assembly. Plays an important role, together with LMNA, in the nuclear anchorage of RB1. TP and TP5 may play a role in T-cell development and function. TP5 is an immunomodulating pentapeptide. This chain is Lamina-associated polypeptide 2, isoform alpha (TMPO), found in Homo sapiens (Human).